Consider the following 468-residue polypeptide: Trigger factor (468 aa).

The region spanning 162–243 (GDVLTLDLQA…VSQVAARELP (82 aa)) is the PPIase FKBP-type domain. The tract at residues 428-468 (NGEIVDLDDEEDEETEAAEADATEAADAEKADDKAEEKTEG) is disordered. A compositionally biased stretch (acidic residues) spans 432 to 453 (VDLDDEEDEETEAAEADATEAA). The span at 454 to 468 (DAEKADDKAEEKTEG) shows a compositional bias: basic and acidic residues.

It belongs to the FKBP-type PPIase family. Tig subfamily.

The protein resides in the cytoplasm. The catalysed reaction is [protein]-peptidylproline (omega=180) = [protein]-peptidylproline (omega=0). Functionally, involved in protein export. Acts as a chaperone by maintaining the newly synthesized protein in an open conformation. Functions as a peptidyl-prolyl cis-trans isomerase. This chain is Trigger factor, found in Streptomyces coelicolor (strain ATCC BAA-471 / A3(2) / M145).